The chain runs to 279 residues: Presqualene diphosphate synthase (279 aa).

The protein belongs to the phytoene/squalene synthase family. HpnD subfamily.

It carries out the reaction 2 (2E,6E)-farnesyl diphosphate = presqualene diphosphate + diphosphate. It functions in the pathway secondary metabolite biosynthesis; hopanoid biosynthesis. In terms of biological role, involved in the biosynthesis of the hopanoid precursor squalene (SQ) from farnesyl diphosphate (FPP). Catalyzes the first step, the formation of presqualene diphosphate (PSPP) from two molecules of FPP. The polypeptide is Presqualene diphosphate synthase (Sinorhizobium fredii (strain NBRC 101917 / NGR234)).